The following is a 316-amino-acid chain: L-lactate dehydrogenase 1 (316 aa).

NAD(+) contacts are provided by Val-17, Asp-38, Lys-43, and Tyr-69. Substrate is bound by residues Arg-92 and Asn-124 to Asp-127. NAD(+)-binding positions include Val-122–Asn-124 and Thr-147. Residue Asp-152 to Arg-155 coordinates substrate. The active-site Proton acceptor is the His-179. Substrate is bound at residue Thr-234.

Belongs to the LDH/MDH superfamily. LDH family. Homotetramer.

The protein localises to the cytoplasm. The enzyme catalyses (S)-lactate + NAD(+) = pyruvate + NADH + H(+). It participates in fermentation; pyruvate fermentation to lactate; (S)-lactate from pyruvate: step 1/1. In terms of biological role, catalyzes the conversion of lactate to pyruvate. This is L-lactate dehydrogenase 1 from Bifidobacterium longum subsp. longum (strain ATCC 15707 / DSM 20219 / JCM 1217 / NCTC 11818 / E194b).